Consider the following 465-residue polypeptide: Siroheme synthase (465 aa).

The precorrin-2 dehydrogenase /sirohydrochlorin ferrochelatase stretch occupies residues 1–203 (MDFLPLFHSL…GRPAEAERLL (203 aa)). Residues 22–23 (EV) and 43–44 (PQ) contribute to the NAD(+) site. Serine 128 is modified (phosphoserine). Positions 217–465 (GEVYLVGAGP…AWFEGAREDA (249 aa)) are uroporphyrinogen-III C-methyltransferase. Proline 226 lines the S-adenosyl-L-methionine pocket. The active-site Proton acceptor is the aspartate 249. Lysine 271 (proton donor) is an active-site residue. S-adenosyl-L-methionine is bound by residues 302 to 304 (GGD), isoleucine 307, 332 to 333 (TA), methionine 384, and glycine 413.

The protein in the N-terminal section; belongs to the precorrin-2 dehydrogenase / sirohydrochlorin ferrochelatase family. This sequence in the C-terminal section; belongs to the precorrin methyltransferase family.

It catalyses the reaction uroporphyrinogen III + 2 S-adenosyl-L-methionine = precorrin-2 + 2 S-adenosyl-L-homocysteine + H(+). It carries out the reaction precorrin-2 + NAD(+) = sirohydrochlorin + NADH + 2 H(+). The enzyme catalyses siroheme + 2 H(+) = sirohydrochlorin + Fe(2+). It participates in cofactor biosynthesis; adenosylcobalamin biosynthesis; precorrin-2 from uroporphyrinogen III: step 1/1. Its pathway is cofactor biosynthesis; adenosylcobalamin biosynthesis; sirohydrochlorin from precorrin-2: step 1/1. The protein operates within porphyrin-containing compound metabolism; siroheme biosynthesis; precorrin-2 from uroporphyrinogen III: step 1/1. It functions in the pathway porphyrin-containing compound metabolism; siroheme biosynthesis; siroheme from sirohydrochlorin: step 1/1. It participates in porphyrin-containing compound metabolism; siroheme biosynthesis; sirohydrochlorin from precorrin-2: step 1/1. In terms of biological role, multifunctional enzyme that catalyzes the SAM-dependent methylations of uroporphyrinogen III at position C-2 and C-7 to form precorrin-2 via precorrin-1. Then it catalyzes the NAD-dependent ring dehydrogenation of precorrin-2 to yield sirohydrochlorin. Finally, it catalyzes the ferrochelation of sirohydrochlorin to yield siroheme. This chain is Siroheme synthase, found in Pseudomonas aeruginosa (strain LESB58).